Reading from the N-terminus, the 604-residue chain is BTB/POZ domain-containing protein SR1IP1 (604 aa).

Residues 27–96 (SDVTVHVGEA…CYGINFDMST (70 aa)) enclose the BTB domain. One can recognise an NPH3 domain in the interval 201-474 (DWWAEDLTVL…VQVLYYEQQR (274 aa)). Tyrosine 415 is modified (phosphotyrosine). Disordered regions lie at residues 478-499 (EVTNDSDSPAPPPPQPAAVLPP) and 532-604 (FEKE…HSIS). Residues 500 to 541 (KLSSYTDELSKLKRENQDLKLELLKMKMKLKEFEKESEKKTS) adopt a coiled-coil conformation. Residues 541-558 (SSSTISTNPSSPISTAST) show a composition bias toward low complexity. Residues 591-604 (GRTKPPKDRRHSIS) are compositionally biased toward basic residues.

This sequence belongs to the NPH3 family. As to quaternary structure, interacts with CAMTA3 and CUL3A.

The protein operates within protein modification; protein ubiquitination. Its function is as follows. Acts as a substrate-specific adapter of an E3 ubiquitin-protein ligase complex (CUL3-RBX1-BTB) which mediates the ubiquitination and subsequent proteasomal degradation of target proteins. Involved in disease resistance. Acts as a substrate adapter that recruits CAMTA3/SR1 for ubiquitination and degradation during pathogen infection. Acts as a positive regulator of plant defense by removing the defense suppressor CAMTA3/SR1. This chain is BTB/POZ domain-containing protein SR1IP1, found in Arabidopsis thaliana (Mouse-ear cress).